Consider the following 441-residue polypeptide: Methionine gamma-lyase (441 aa).

Residues 1-25 (MAHFLETQEPLVFSGKKRNDRDDED) are disordered. Position 248 is an N6-(pyridoxal phosphate)lysine (lysine 248).

Belongs to the trans-sulfuration enzymes family. Homotetramer. Requires pyridoxal 5'-phosphate as cofactor. In terms of tissue distribution, expressed in roots, stems, siliques, leaves, flowers and seeds after imbibition (at protein level). Transcripts accumulate in dry mature seeds, but at protein level, only present upon imbibition.

It is found in the cytoplasm. It catalyses the reaction L-methionine + H2O = methanethiol + 2-oxobutanoate + NH4(+). In terms of biological role, catalyzes the degradation of L-methionine to alpha-ketobutyrate, methanethiol and ammonia. Exhibits a high activity toward L-methionine, L-ethionine, L-homocysteine and seleno-L-methionine, but not L-cysteine. Involved in an alternative cysteine biosynthesis pathway to the reverse trans-sulfuration pathway (methionine-&gt;homocysteine-&gt;cystathionine-&gt;cysteine) in which methanethiol is an intermediate. Also mediates an alternative isoleucine biosynthesis pathway in which 2-ketobutyrate is an intermediate. The sequence is that of Methionine gamma-lyase (MGL) from Arabidopsis thaliana (Mouse-ear cress).